The sequence spans 210 residues: ATP-dependent Clp protease proteolytic subunit (210 aa).

The Nucleophile role is filled by Ser106. His131 is a catalytic residue.

It belongs to the peptidase S14 family. Fourteen ClpP subunits assemble into 2 heptameric rings which stack back to back to give a disk-like structure with a central cavity, resembling the structure of eukaryotic proteasomes.

The protein localises to the cytoplasm. It catalyses the reaction Hydrolysis of proteins to small peptides in the presence of ATP and magnesium. alpha-casein is the usual test substrate. In the absence of ATP, only oligopeptides shorter than five residues are hydrolyzed (such as succinyl-Leu-Tyr-|-NHMec, and Leu-Tyr-Leu-|-Tyr-Trp, in which cleavage of the -Tyr-|-Leu- and -Tyr-|-Trp bonds also occurs).. Functionally, cleaves peptides in various proteins in a process that requires ATP hydrolysis. Has a chymotrypsin-like activity. Plays a major role in the degradation of misfolded proteins. In Bartonella tribocorum (strain CIP 105476 / IBS 506), this protein is ATP-dependent Clp protease proteolytic subunit.